Here is a 210-residue protein sequence, read N- to C-terminus: NAD(P)H-quinone oxidoreductase subunit I (210 aa).

4Fe-4S ferredoxin-type domains follow at residues 54–83 (GRIH…VDWA) and 94–123 (YSYS…VTED). The [4Fe-4S] cluster site is built by Cys63, Cys66, Cys69, Cys73, Cys103, Cys106, Cys109, and Cys113.

It belongs to the complex I 23 kDa subunit family. As to quaternary structure, NDH-1 is composed of at least 11 different subunits. [4Fe-4S] cluster is required as a cofactor.

The protein resides in the cellular thylakoid membrane. The catalysed reaction is a plastoquinone + NADH + (n+1) H(+)(in) = a plastoquinol + NAD(+) + n H(+)(out). It catalyses the reaction a plastoquinone + NADPH + (n+1) H(+)(in) = a plastoquinol + NADP(+) + n H(+)(out). In terms of biological role, NDH-1 shuttles electrons from an unknown electron donor, via FMN and iron-sulfur (Fe-S) centers, to quinones in the respiratory and/or the photosynthetic chain. The immediate electron acceptor for the enzyme in this species is believed to be plastoquinone. Couples the redox reaction to proton translocation, and thus conserves the redox energy in a proton gradient. This Synechococcus sp. (strain JA-2-3B'a(2-13)) (Cyanobacteria bacterium Yellowstone B-Prime) protein is NAD(P)H-quinone oxidoreductase subunit I.